A 236-amino-acid chain; its full sequence is Probable 2-phosphosulfolactate phosphatase (236 aa).

Belongs to the ComB family. Mg(2+) serves as cofactor.

The enzyme catalyses (2R)-O-phospho-3-sulfolactate + H2O = (2R)-3-sulfolactate + phosphate. The chain is Probable 2-phosphosulfolactate phosphatase from Gloeobacter violaceus (strain ATCC 29082 / PCC 7421).